A 170-amino-acid chain; its full sequence is Cyclic pyranopterin monophosphate synthase (170 aa).

Substrate is bound by residues 75–77 (MCH) and 115–116 (ME). D130 is a catalytic residue.

It belongs to the MoaC family. In terms of assembly, homohexamer; trimer of dimers.

It carries out the reaction (8S)-3',8-cyclo-7,8-dihydroguanosine 5'-triphosphate = cyclic pyranopterin phosphate + diphosphate. The protein operates within cofactor biosynthesis; molybdopterin biosynthesis. Its function is as follows. Catalyzes the conversion of (8S)-3',8-cyclo-7,8-dihydroguanosine 5'-triphosphate to cyclic pyranopterin monophosphate (cPMP). The sequence is that of Cyclic pyranopterin monophosphate synthase from Bacillus velezensis (strain DSM 23117 / BGSC 10A6 / LMG 26770 / FZB42) (Bacillus amyloliquefaciens subsp. plantarum).